The chain runs to 99 residues: Aspartyl/glutamyl-tRNA(Asn/Gln) amidotransferase subunit C (99 aa).

This sequence belongs to the GatC family. In terms of assembly, heterotrimer of A, B and C subunits.

The catalysed reaction is L-glutamyl-tRNA(Gln) + L-glutamine + ATP + H2O = L-glutaminyl-tRNA(Gln) + L-glutamate + ADP + phosphate + H(+). The enzyme catalyses L-aspartyl-tRNA(Asn) + L-glutamine + ATP + H2O = L-asparaginyl-tRNA(Asn) + L-glutamate + ADP + phosphate + 2 H(+). In terms of biological role, allows the formation of correctly charged Asn-tRNA(Asn) or Gln-tRNA(Gln) through the transamidation of misacylated Asp-tRNA(Asn) or Glu-tRNA(Gln) in organisms which lack either or both of asparaginyl-tRNA or glutaminyl-tRNA synthetases. The reaction takes place in the presence of glutamine and ATP through an activated phospho-Asp-tRNA(Asn) or phospho-Glu-tRNA(Gln). This chain is Aspartyl/glutamyl-tRNA(Asn/Gln) amidotransferase subunit C, found in Ralstonia pickettii (strain 12J).